The chain runs to 831 residues: Protein translocase subunit SecA (831 aa).

ATP contacts are provided by residues Gln-88, Gly-106–Thr-110, and Asp-495. Cys-816, Cys-818, Cys-827, and Cys-828 together coordinate Zn(2+).

It belongs to the SecA family. As to quaternary structure, monomer and homodimer. Part of the essential Sec protein translocation apparatus which comprises SecA, SecYEG and auxiliary proteins SecDF-YajC and YidC. Requires Zn(2+) as cofactor.

The protein resides in the cell membrane. It localises to the cytoplasm. It catalyses the reaction ATP + H2O + cellular proteinSide 1 = ADP + phosphate + cellular proteinSide 2.. Its function is as follows. Part of the Sec protein translocase complex. Interacts with the SecYEG preprotein conducting channel. Has a central role in coupling the hydrolysis of ATP to the transfer of proteins into and across the cell membrane, serving as an ATP-driven molecular motor driving the stepwise translocation of polypeptide chains across the membrane. The sequence is that of Protein translocase subunit SecA from Lawsonia intracellularis (strain PHE/MN1-00).